A 199-amino-acid polypeptide reads, in one-letter code: Phosphatidylethanolamine N-methyltransferase (199 aa).

Residues 1 to 12 lie on the Lumenal side of the membrane; sequence MTRLLGYVDPLD. Positions 13–33 form an intramembrane region, helical; it reads PSFVAAVITITFNPLYWNVVA. The Lumenal portion of the chain corresponds to 34-45; sequence RWEHKTRKLSRA. The chain crosses the membrane as a helical span at residues 46–66; sequence FGSPYLACYSLSVTILLLNFL. Residues 67–93 are Cytoplasmic-facing; that stretch reads RSHCFTQAMLSQPRMESLDTPAAYSLG. Residues 94–114 form a helical membrane-spanning segment; that stretch reads LALLGLGVVLVLSSFFALGFA. 98–100 serves as a coordination point for S-adenosyl-L-methionine; that stretch reads GLG. At 115 to 157 the chain is on the lumenal side; that stretch reads GTFLGDYFGILKEARVTVFPFNILDNPMYWGSTANYLGWAIMH. The chain crosses the membrane as a helical span at residues 158–178; that stretch reads ASPTGLLLTVLVALTYIVALL. Topologically, residues 179-199 are cytoplasmic; that stretch reads YEEPFTAEIYRQKASGSHKRS. S-adenosyl-L-methionine is bound at residue 180–181; it reads EE.

The protein belongs to the class VI-like SAM-binding methyltransferase superfamily. PEMT/PEM2 methyltransferase family. Post-translationally, isoform 2 is N-glycosylated with high-mannose oligosaccharides. Primarily expressed in liver (at protein level).

The protein resides in the endoplasmic reticulum. It is found in the endoplasmic reticulum membrane. It localises to the mitochondrion membrane. The enzyme catalyses a 1,2-diacyl-sn-glycero-3-phospho-N-methylethanolamine + S-adenosyl-L-methionine = a 1,2-diacyl-sn-glycero-3-phospho-N,N-dimethylethanolamine + S-adenosyl-L-homocysteine + H(+). It catalyses the reaction a 1,2-diacyl-sn-glycero-3-phospho-N,N-dimethylethanolamine + S-adenosyl-L-methionine = a 1,2-diacyl-sn-glycero-3-phosphocholine + S-adenosyl-L-homocysteine + H(+). The catalysed reaction is a 1,2-diacyl-sn-glycero-3-phosphoethanolamine + S-adenosyl-L-methionine = a 1,2-diacyl-sn-glycero-3-phospho-N-methylethanolamine + S-adenosyl-L-homocysteine + H(+). It carries out the reaction 1,2-di-(9Z-octadecenoyl)-sn-glycero-3-phosphoethanolamine + S-adenosyl-L-methionine = 1,2-di-(9Z-octadecenoyl)-sn-glycero-3-phospho-N-methylethanolamine + S-adenosyl-L-homocysteine + H(+). The enzyme catalyses 1,2-di-(9Z-octadecenoyl)-sn-glycero-3-phospho-N-methylethanolamine + S-adenosyl-L-methionine = 1,2-di-(9Z-octadecenoyl)-sn-glycero-3-phospho-N,N-dimethylethanolamine + S-adenosyl-L-homocysteine + H(+). It catalyses the reaction 1,2-di-(9Z-octadecenoyl)-sn-glycero-3-phospho-N,N-dimethylethanolamine + S-adenosyl-L-methionine = 1,2-di-(9Z-octadecenoyl)-sn-glycero-3-phosphocholine + S-adenosyl-L-homocysteine + H(+). The catalysed reaction is 1,2-di-(9Z,12Z-octadecadienoyl)-sn-glycero-3-phosphoethanolamine + S-adenosyl-L-methionine = 1,2-di-(9Z,12Z-octadecadienoyl)-sn-glycero-3-phospho-N-methylethanolamine + S-adenosyl-L-homocysteine + H(+). It carries out the reaction 1,2-di-(9Z,12Z-octadecadienoyl)-sn-glycero-3-phospho-N-methylethanolamine + S-adenosyl-L-methionine = 1,2-di-(9Z,12Z-octadecadienoyl)-sn-glycero-3-phospho-N,N-dimethylethanolamine + S-adenosyl-L-homocysteine + H(+). The enzyme catalyses 1,2-di-(9Z,12Z-octadecadienoyl)-sn-glycero-3-phospho-N,N-dimethylethanolamine + S-adenosyl-L-methionine = 1,2-di-(9Z,12Z-octadecadienoyl)-sn-glycero-3-phosphocholine + S-adenosyl-L-homocysteine + H(+). It catalyses the reaction 1,2-di-(9Z,12Z,15Z-octadecatrienoyl)-sn-glycero-3-phosphoethanolamine + S-adenosyl-L-methionine = 1,2-di-(9Z,12Z,15Z-octadecatrienoyl)-sn-glycero-3-phospho-N-methylethanolamine + S-adenosyl-L-homocysteine + H(+). The catalysed reaction is 1,2-di-(9Z,12Z,15Z-octadecatrienoyl)-sn-glycero-3-phospho-N-methylethanolamine + S-adenosyl-L-methionine = 1,2-di-(9Z,12Z,15Z-octadecatrienoyl)-sn-glycero-3-phospho-N,N-dimethylethanolamine + S-adenosyl-L-homocysteine + H(+). It carries out the reaction 1,2-di-(9Z,12Z,15Z-octadecatrienoyl)-sn-glycero-3-phospho-N,N-dimethylethanolamine + S-adenosyl-L-methionine = 1,2-di-(9Z,12Z,15Z-octadecatrienoyl)-sn-glycero-3-phosphocholine + S-adenosyl-L-homocysteine + H(+). The enzyme catalyses 1-hexadecanoyl-2-(4Z,7Z,10Z,13Z,16Z,19Z-docosahexaenoyl)-sn-glycero-3-phosphoethanolamine + S-adenosyl-L-methionine = 1-hexadecanoyl-2-(4Z,7Z,10Z,13Z,16Z,19Z-docosahexaenoyl)-sn-glycero-3-phospho-N-methylethanolamine + S-adenosyl-L-homocysteine + H(+). It catalyses the reaction 1-hexadecanoyl-2-(4Z,7Z,10Z,13Z,16Z,19Z-docosahexaenoyl)-sn-glycero-3-phospho-N-methylethanolamine + S-adenosyl-L-methionine = 1-hexadecanoyl-2-(4Z,7Z,10Z,13Z,16Z,19Z-docosahexaenoyl)-sn-glycero-3-phospho-N,N-dimethylethanolamine + S-adenosyl-L-homocysteine + H(+). The catalysed reaction is 1-hexadecanoyl-2-(4Z,7Z,10Z,13Z,16Z,19Z-docosahexaenoyl)-sn-glycero-3-phospho-N,N-dimethylethanolamine + S-adenosyl-L-methionine = 1-hexadecanoyl-2-(4Z,7Z,10Z,13Z,16Z,19Z-docosahexaenoyl)-sn-glycero-3-phosphocholine + S-adenosyl-L-homocysteine + H(+). It functions in the pathway phospholipid metabolism; phosphatidylcholine biosynthesis. With respect to regulation, the first methylation is rate-limiting. Functionally, catalyzes the three sequential steps of the methylation pathway for the biosynthesis of phosphatidylcholine, a critical and essential component for membrane structure. Uses S-adenosylmethionine (S-adenosyl-L-methionine, SAM or AdoMet) as the methyl group donor for the methylation of phosphatidylethanolamine (1,2-diacyl-sn-glycero-3-phosphoethanolamine, PE) to phosphatidylmonomethylethanolamine (1,2-diacyl-sn-glycero-3-phospho-N-methylethanolamine, PMME), PMME to phosphatidyldimethylethanolamine (1,2-diacyl-sn-glycero-3-phospho-N,N-dimethylethanolamine, PDME), and PDME to phosphatidylcholine (1,2-diacyl-sn-glycero-3-phosphocholine, PC), producing S-adenosyl-L-homocysteine in each step. Responsible for approximately 30% of hepatic PC with the CDP-choline pathway accounting for the other 70%. In terms of biological role, catalyzes the three sequential steps of the methylation of 1,2-diacyl-sn-glycero-3-phospho-N-methylethanolamine (PMME) to 1,2-diacyl-sn-glycero-3-phospho-N,N-dimethylethanolamine (PDME) more efficiently than isoform 2. Induces increase in PC species with longer polyunsaturated chains than isoform 2. Its function is as follows. Produces a higher increase in the level of PC species containing long chains with three double bonds than isoform 1. In Homo sapiens (Human), this protein is Phosphatidylethanolamine N-methyltransferase.